We begin with the raw amino-acid sequence, 184 residues long: Inosine triphosphate pyrophosphatase (184 aa).

10 to 15 is an ITP binding site; that stretch reads TGNANK. Position 38 (Glu38) interacts with Mg(2+). Residues Lys50, 66-67, Lys83, 142-145, Lys163, and 168-169 contribute to the ITP site; these read DT, FGWD, and HR.

This sequence belongs to the HAM1 NTPase family. In terms of assembly, homodimer. Requires Mg(2+) as cofactor. Mn(2+) serves as cofactor.

The protein localises to the cytoplasm. It localises to the nucleus. It catalyses the reaction ITP + H2O = IMP + diphosphate + H(+). It carries out the reaction dITP + H2O = dIMP + diphosphate + H(+). The catalysed reaction is XTP + H2O = XMP + diphosphate + H(+). Pyrophosphatase that hydrolyzes non-canonical purine nucleotides such as inosine triphosphate (ITP), deoxyinosine triphosphate (dITP) or xanthosine 5'-triphosphate (XTP) to their respective monophosphate derivatives. The enzyme does not distinguish between the deoxy- and ribose forms. Probably excludes non-canonical purines from RNA and DNA precursor pools, thus preventing their incorporation into RNA and DNA and avoiding chromosomal lesions. The sequence is that of Inosine triphosphate pyrophosphatase from Fusarium vanettenii (strain ATCC MYA-4622 / CBS 123669 / FGSC 9596 / NRRL 45880 / 77-13-4) (Fusarium solani subsp. pisi).